The chain runs to 143 residues: Putative pre-16S rRNA nuclease (143 aa).

This sequence belongs to the YqgF nuclease family.

Its subcellular location is the cytoplasm. Functionally, could be a nuclease involved in processing of the 5'-end of pre-16S rRNA. The polypeptide is Putative pre-16S rRNA nuclease (Agathobacter rectalis (strain ATCC 33656 / DSM 3377 / JCM 17463 / KCTC 5835 / VPI 0990) (Eubacterium rectale)).